Reading from the N-terminus, the 227-residue chain is Uridylate kinase (227 aa).

An ATP-binding site is contributed by 6–10 (KVSGK). Gly43 serves as a coordination point for UMP. Residues Gly44 and Arg48 each contribute to the ATP site. Residues Asp65 and 113 to 119 (FQPGQST) each bind UMP. Residues Thr139, Asn140, Tyr145, and Asp148 each contribute to the ATP site.

It belongs to the UMP kinase family. In terms of assembly, homohexamer.

It is found in the cytoplasm. The catalysed reaction is UMP + ATP = UDP + ADP. It participates in pyrimidine metabolism; CTP biosynthesis via de novo pathway; UDP from UMP (UMPK route): step 1/1. With respect to regulation, inhibited by UTP. Functionally, catalyzes the reversible phosphorylation of UMP to UDP. In Sulfolobus acidocaldarius (strain ATCC 33909 / DSM 639 / JCM 8929 / NBRC 15157 / NCIMB 11770), this protein is Uridylate kinase.